Here is a 269-residue protein sequence, read N- to C-terminus: Ribosomal RNA small subunit methyltransferase A (269 aa).

6 residues coordinate S-adenosyl-L-methionine: histidine 12, leucine 14, glycine 39, glutamate 60, aspartate 81, and asparagine 103.

Belongs to the class I-like SAM-binding methyltransferase superfamily. rRNA adenine N(6)-methyltransferase family. RsmA subfamily.

The protein resides in the cytoplasm. It catalyses the reaction adenosine(1518)/adenosine(1519) in 16S rRNA + 4 S-adenosyl-L-methionine = N(6)-dimethyladenosine(1518)/N(6)-dimethyladenosine(1519) in 16S rRNA + 4 S-adenosyl-L-homocysteine + 4 H(+). Specifically dimethylates two adjacent adenosines (A1518 and A1519) in the loop of a conserved hairpin near the 3'-end of 16S rRNA in the 30S particle. May play a critical role in biogenesis of 30S subunits. This Leptothrix cholodnii (strain ATCC 51168 / LMG 8142 / SP-6) (Leptothrix discophora (strain SP-6)) protein is Ribosomal RNA small subunit methyltransferase A.